Consider the following 384-residue polypeptide: Probable 2-heptyl-3-hydroxy-4(1H)-quinolone synthase AqdB2 (384 aa).

It belongs to the 3-hydroxybenzoate 6-hydroxylase family.

It carries out the reaction 2-heptyl-4(1H)-quinolone + NADH + O2 + H(+) = 2-heptyl-3-hydroxy-4(1H)-quinolone + NAD(+) + H2O. Its function is as follows. Involved in the degradation of the Pseudomonas aeruginosa quorum sensing signal molecule HHQ (2-heptyl-4-quinolone) to anthranilic acid. Probably catalyzes the hydroxylation of HHQ to PQS (2-heptyl-3-hydroxy-4-quinolone). The sequence is that of Probable 2-heptyl-3-hydroxy-4(1H)-quinolone synthase AqdB2 from Rhodococcus erythropolis (Arthrobacter picolinophilus).